Reading from the N-terminus, the 118-residue chain is Small ribosomal subunit protein uS13 (118 aa).

The interval 94-118 (SLPLRGQRTKTNARTRKGPRKPIKK) is disordered.

It belongs to the universal ribosomal protein uS13 family. Part of the 30S ribosomal subunit. Forms a loose heterodimer with protein S19. Forms two bridges to the 50S subunit in the 70S ribosome.

Its function is as follows. Located at the top of the head of the 30S subunit, it contacts several helices of the 16S rRNA. In the 70S ribosome it contacts the 23S rRNA (bridge B1a) and protein L5 of the 50S subunit (bridge B1b), connecting the 2 subunits; these bridges are implicated in subunit movement. Contacts the tRNAs in the A and P-sites. This chain is Small ribosomal subunit protein uS13, found in Colwellia psychrerythraea (strain 34H / ATCC BAA-681) (Vibrio psychroerythus).